A 343-amino-acid chain; its full sequence is Anthranilate phosphoribosyltransferase (343 aa).

Residues G84, 87-88, T92, 94-97, 112-120, and S124 contribute to the 5-phospho-alpha-D-ribose 1-diphosphate site; these read GD, NIST, and KHGNRSVSS. G84 is an anthranilate binding site. Position 96 (S96) interacts with Mg(2+). Residue N115 coordinates anthranilate. Residue R170 coordinates anthranilate. Mg(2+) contacts are provided by D229 and E230.

The protein belongs to the anthranilate phosphoribosyltransferase family. Homodimer. It depends on Mg(2+) as a cofactor.

It carries out the reaction N-(5-phospho-beta-D-ribosyl)anthranilate + diphosphate = 5-phospho-alpha-D-ribose 1-diphosphate + anthranilate. It participates in amino-acid biosynthesis; L-tryptophan biosynthesis; L-tryptophan from chorismate: step 2/5. Functionally, catalyzes the transfer of the phosphoribosyl group of 5-phosphorylribose-1-pyrophosphate (PRPP) to anthranilate to yield N-(5'-phosphoribosyl)-anthranilate (PRA). The sequence is that of Anthranilate phosphoribosyltransferase from Stenotrophomonas maltophilia (strain R551-3).